A 201-amino-acid polypeptide reads, in one-letter code: uncharacterized protein (201 aa).

Belongs to the mimivirus L885/R898 family.

This is an uncharacterized protein from Acanthamoeba polyphaga (Amoeba).